Consider the following 171-residue polypeptide: O-acetyl-ADP-ribose deacetylase 2 (171 aa).

A Macro domain is found at 1–171 (MNKITVIQGD…NYDLYLKLLN (171 aa)). Substrate contacts are provided by residues 10 to 11 (DI), asparagine 24, 32 to 34 (GVD), and 121 to 125 (STGIY). The Proton acceptor role is filled by aspartate 34.

Belongs to the MacroD-type family. YmdB subfamily. In terms of assembly, homodimer. Interacts with RNase III.

It catalyses the reaction 3''-O-acetyl-ADP-D-ribose + H2O = ADP-D-ribose + acetate + H(+). It carries out the reaction 2''-O-acetyl-ADP-D-ribose + H2O = ADP-D-ribose + acetate + H(+). In terms of biological role, deacetylates O-acetyl-ADP ribose to yield ADP-ribose and free acetate. Down-regulates ribonuclease 3 (RNase III) activity. Acts by interacting directly with the region of the ribonuclease that is required for dimerization/activation. The polypeptide is O-acetyl-ADP-ribose deacetylase 2 (Pantoea vagans (strain C9-1) (Pantoea agglomerans (strain C9-1))).